A 478-amino-acid polypeptide reads, in one-letter code: UDP-glycosyltransferase 90A1 (478 aa).

UDP-alpha-D-glucose is bound by residues threonine 289, 343-345, 360-368, and 382-385; these read VDQ, HCGWNSAQE, and MAEQ.

This sequence belongs to the UDP-glycosyltransferase family.

The chain is UDP-glycosyltransferase 90A1 (UGT90A1) from Arabidopsis thaliana (Mouse-ear cress).